Consider the following 473-residue polypeptide: ATP synthase subunit beta (473 aa).

153–160 (GGAGVGKT) contributes to the ATP binding site.

Belongs to the ATPase alpha/beta chains family. As to quaternary structure, F-type ATPases have 2 components, CF(1) - the catalytic core - and CF(0) - the membrane proton channel. CF(1) has five subunits: alpha(3), beta(3), gamma(1), delta(1), epsilon(1). CF(0) has three main subunits: a(1), b(2) and c(9-12). The alpha and beta chains form an alternating ring which encloses part of the gamma chain. CF(1) is attached to CF(0) by a central stalk formed by the gamma and epsilon chains, while a peripheral stalk is formed by the delta and b chains.

The protein localises to the cell inner membrane. The enzyme catalyses ATP + H2O + 4 H(+)(in) = ADP + phosphate + 5 H(+)(out). Its function is as follows. Produces ATP from ADP in the presence of a proton gradient across the membrane. The catalytic sites are hosted primarily by the beta subunits. The sequence is that of ATP synthase subunit beta from Rickettsia conorii (strain ATCC VR-613 / Malish 7).